The sequence spans 235 residues: Glial cell line-derived neurotrophic factor (235 aa).

The signal sequence occupies residues 1–19 (MKLWDILATCLLLLSSVST). Positions 20–87 (RPLFHKLQPS…DFIEATLGRL (68 aa)) are excised as a propeptide. 2 disordered regions span residues 34 to 60 (VRSE…ASME) and 91 to 137 (SDVE…RVKG). Residues 119-128 (GERKRSRGRA) are compositionally biased toward basic residues. Intrachain disulfides connect C142/C203, C169/C232, and C173/C234. Residues N150 and N186 are each glycosylated (N-linked (GlcNAc...) asparagine).

It belongs to the TGF-beta family. GDNF subfamily. Homodimer; disulfide-linked. Interacts with GFRA1 coreceptor and RET: forms a 2:2:2 ternary complex composed of GDNF ligand, GFRA1 and RET receptor. In terms of tissue distribution, first expressed at 14 hours post-fertilization (hpf) in the ventral half of anterior somites and in intermediate mesoderm. Ventral somitic expression persists and extends more posteriorly over the next 12 hours. Expressed throughout the ventral trunk mesoderm and endoderm at 24 hpf. By 30 hpf, somitic expression ceases and by 36 hpf, expression becomes restricted to the endodermal cells forming the gut, with expression along the whole length of the developing gut tube at 72 hpf.

It is found in the secreted. Its function is as follows. Neurotrophic factor that enhances survival and morphological differentiation of dopaminergic neurons and increases their high-affinity dopamine uptake. Acts by binding to its coreceptor, GFRA1, leading to autophosphorylation and activation of the RET receptor. This Danio rerio (Zebrafish) protein is Glial cell line-derived neurotrophic factor.